The following is a 166-amino-acid chain: Interleukin-3 (166 aa).

Residues 1–27 form the signal peptide; that stretch reads MVLASSTTSILCMLLPLLMLFHQGLQI. 2 cysteine pairs are disulfide-bonded: C43-C106 and C105-C166. N-linked (GlcNAc...) asparagine glycosylation is found at N60 and N70. A disordered region spans residues 145–166; sequence SVSRPPQPTSSSDNFRPMTVEC.

It belongs to the IL-3 family. As to quaternary structure, monomer. As to expression, activated T-cells, mast cells, natural killer cells.

It is found in the secreted. Cytokine secreted predominantly by activated T-lymphocytes as well as mast cells and osteoblastic cells that controls the production and differentiation of hematopoietic progenitor cells into lineage-restricted cells. Also stimulates mature basophils, eosinophils, and monocytes to become functionally activated. In addition, plays an important role in neural cell proliferation and survival. Participates as well in bone homeostasis and inhibits osteoclast differentiation by preventing NF-kappa-B nuclear translocation and activation. Mechanistically, exerts its biological effects through a receptor composed of IL3RA subunit and a signal transducing subunit IL3RB. Receptor stimulation results in the rapid activation of JAK2 kinase activity leading to STAT5-mediated transcriptional program. Alternatively, contributes to cell survival under oxidative stress in non-hematopoietic systems by activating pathways mediated by PI3K/AKT and ERK. The protein is Interleukin-3 (Il3) of Rattus norvegicus (Rat).